Here is a 331-residue protein sequence, read N- to C-terminus: Proline-rich protein 33 (331 aa).

Disordered stretches follow at residues 1–112, 128–185, and 204–247; these read MGPQ…SVPR, SLES…PKVA, and APEP…APAS. A compositionally biased stretch (pro residues) spans 94–105; that stretch reads PEEPPVPRPPPG. The span at 149-169 shows a compositional bias: low complexity; that stretch reads PPMAGPAAEAERVSSPAWASS. Positions 170-185 are enriched in pro residues; sequence PTPPSGPHPCPVPKVA. Over residues 217–238 the composition is skewed to low complexity; that stretch reads EPEVPTPTEQEVPAPTEQEVPA.

The polypeptide is Proline-rich protein 33 (PRR33) (Homo sapiens (Human)).